We begin with the raw amino-acid sequence, 119 residues long: Large ribosomal subunit protein bL20 (119 aa).

Belongs to the bacterial ribosomal protein bL20 family.

Its function is as follows. Binds directly to 23S ribosomal RNA and is necessary for the in vitro assembly process of the 50S ribosomal subunit. It is not involved in the protein synthesizing functions of that subunit. The chain is Large ribosomal subunit protein bL20 from Rhodopseudomonas palustris (strain ATCC BAA-98 / CGA009).